Here is a 103-residue protein sequence, read N- to C-terminus: Large ribosomal subunit protein uL23 (103 aa).

The protein belongs to the universal ribosomal protein uL23 family. In terms of assembly, part of the 50S ribosomal subunit. Contacts protein L29, and trigger factor when it is bound to the ribosome.

In terms of biological role, one of the early assembly proteins it binds 23S rRNA. One of the proteins that surrounds the polypeptide exit tunnel on the outside of the ribosome. Forms the main docking site for trigger factor binding to the ribosome. The chain is Large ribosomal subunit protein uL23 from Aquifex aeolicus (strain VF5).